The primary structure comprises 576 residues: RING finger and SPRY domain-containing protein 1 (576 aa).

Residues 1 to 16 (MIVFGWAVFLASRSLG) form the signal peptide. Phosphoserine is present on S50. Residues 50–99 (SGTDDSVDTQQQQAENSAVPTADTRSQPRDPVRPPRRGRGPHEPRRKKQN) form a disordered region. The span at 57–68 (DTQQQQAENSAV) shows a compositional bias: polar residues. The segment covering 83 to 97 (PPRRGRGPHEPRRKK) has biased composition (basic residues). Residues 300–483 (LFLKEGRQLT…CEFNFGAKPF (184 aa)) enclose the B30.2/SPRY domain. An N-linked (GlcNAc...) asparagine glycan is attached at N314. The RING-type zinc finger occupies 527 to 562 (CSLCCDEVADTQLKPCGHSDLCMDCALQLETCPLCR).

It localises to the secreted. This chain is RING finger and SPRY domain-containing protein 1 (RSPRY1), found in Pongo abelii (Sumatran orangutan).